Reading from the N-terminus, the 538-residue chain is Phosphatidylethanolamine transferase Mcr-2 (538 aa).

The next 5 membrane-spanning stretches (helical) occupy residues 14–34 (PFVL…LTFF), 47–67 (LGFI…IVVL), 72–92 (YVLK…SYFT), 121–141 (LAFF…VAVA), and 161–181 (VSLV…ASFF). Zn(2+)-binding residues include E244 and T283. Intrachain disulfides connect C279-C289, C354-C362, and C412-C420. The residue at position 283 (T283) is a Phosphothreonine. D463 and H464 together coordinate Zn(2+).

The protein belongs to the phosphoethanolamine transferase family. In terms of assembly, monomer. Post-translationally, phosphorylated at Thr-283; may represent an intermediate in the catalytic mechanism.

The protein resides in the cell inner membrane. It carries out the reaction lipid A (E. coli) + a 1,2-diacyl-sn-glycero-3-phosphoethanolamine + H(+) = lipid A 4'-(2-aminoethyl diphosphate) (E. coli) + a 1,2-diacyl-sn-glycerol. Probably catalyzes the addition of a phosphoethanolamine moiety to lipid A. Phosphoethanolamine modification of lipid A confers polymyxin resistance. Confers resistance to polymyxin-type antibiotics such as colistin. This is Phosphatidylethanolamine transferase Mcr-2 from Escherichia coli.